The primary structure comprises 402 residues: Phosphomevalonate dehydratase large subunit (402 aa).

Residues glycine 48, alanine 49, serine 50, asparagine 79, and proline 80 each contribute to the (R)-5-phosphomevalonate site. [4Fe-4S] cluster is bound at residue cysteine 122. (R)-5-phosphomevalonate contacts are provided by glutamate 145 and serine 146. The [4Fe-4S] cluster site is built by cysteine 297 and cysteine 356. Lysine 377 is a (R)-5-phosphomevalonate binding site.

This sequence belongs to the AcnX type II large subunit family. As to quaternary structure, heterodimer composed of a large subunit (PMDh-L) and a small subunit (PMDh-S). [4Fe-4S] cluster serves as cofactor.

It carries out the reaction (R)-5-phosphomevalonate = (2E)-3-methyl-5-phosphooxypent-2-enoate + H2O. The protein operates within isoprenoid biosynthesis; isopentenyl diphosphate biosynthesis via mevalonate pathway. Its activity is regulated as follows. Neither the addition of 1 mM Mg(2+) nor 1 mM Mn(2+) has a significant effect on the activity, whereas Zn(2+) causes almost complete inactivation. Strongly inhibited by H(2)O(2), but not by EDTA or iodoacetamide. In terms of biological role, component of a hydro-lyase that catalyzes the dehydration of mevalonate 5-phosphate (MVA5P) to form trans-anhydromevalonate 5-phosphate (tAHMP). Involved in the archaeal mevalonate (MVA) pathway, which provides fundamental precursors for isoprenoid biosynthesis, such as isopentenyl diphosphate (IPP) and dimethylallyl diphosphate (DMAPP). In Aeropyrum pernix (strain ATCC 700893 / DSM 11879 / JCM 9820 / NBRC 100138 / K1), this protein is Phosphomevalonate dehydratase large subunit.